The sequence spans 396 residues: GPN-loop GTPase 1 (396 aa).

Positions 1–13 are enriched in low complexity; the sequence is MSETTATSTTTTK. The tract at residues 1-30 is disordered; it reads MSETTATSTTTTKTTDKDNVNNNNNNENKE. 44-49 is a GTP binding site; sequence GSGKTT. The Gly-Pro-Asn (GPN)-loop; involved in dimer interface motif lies at 101-103; that stretch reads GPN. 204 to 207 lines the GTP pocket; it reads NKID. Residues 284–387 are a coiled coil; sequence YKADLEKIKK…ERLEDQRAYE (104 aa). The segment covering 325 to 342 has biased composition (basic and acidic residues); it reads DFKKEKKRENQEKTKNIY. The segment at 325–396 is disordered; that stretch reads DFKKEKKREN…ESLMSSIKKI (72 aa). Over residues 343–380 the composition is skewed to acidic residues; sequence DDEEDDYRDDRDMEDSGEYESYEDEQEEGDYENEEERL.

The protein belongs to the GPN-loop GTPase family. In terms of assembly, heterodimer with gpn3. Binds to RNA polymerase II (RNAPII).

The protein localises to the cytoplasm. Its subcellular location is the nucleus. Functionally, small GTPase required for proper nuclear import of RNA polymerase II (RNAPII). May act at an RNAP assembly step prior to nuclear import. This is GPN-loop GTPase 1 (gpn1) from Dictyostelium discoideum (Social amoeba).